Reading from the N-terminus, the 420-residue chain is Serine hydroxymethyltransferase (420 aa).

(6S)-5,6,7,8-tetrahydrofolate contacts are provided by residues leucine 121 and 125–127; that span reads GHL. Lysine 229 is modified (N6-(pyridoxal phosphate)lysine).

The protein belongs to the SHMT family. In terms of assembly, homodimer. It depends on pyridoxal 5'-phosphate as a cofactor.

It is found in the cytoplasm. It carries out the reaction (6R)-5,10-methylene-5,6,7,8-tetrahydrofolate + glycine + H2O = (6S)-5,6,7,8-tetrahydrofolate + L-serine. It functions in the pathway one-carbon metabolism; tetrahydrofolate interconversion. The protein operates within amino-acid biosynthesis; glycine biosynthesis; glycine from L-serine: step 1/1. In terms of biological role, catalyzes the reversible interconversion of serine and glycine with tetrahydrofolate (THF) serving as the one-carbon carrier. This reaction serves as the major source of one-carbon groups required for the biosynthesis of purines, thymidylate, methionine, and other important biomolecules. Also exhibits THF-independent aldolase activity toward beta-hydroxyamino acids, producing glycine and aldehydes, via a retro-aldol mechanism. The sequence is that of Serine hydroxymethyltransferase from Glaesserella parasuis serovar 5 (strain SH0165) (Haemophilus parasuis).